The primary structure comprises 244 residues: tRNA (guanine-N(7)-)-methyltransferase (244 aa).

Residues 1 to 10 (MSDTPQSPAQ) show a composition bias toward polar residues. The interval 1 to 20 (MSDTPQSPAQDSLAEHDEAR) is disordered. Glu-74, Glu-99, Asp-126, and Asp-149 together coordinate S-adenosyl-L-methionine. Asp-149 is an active-site residue. Residues Lys-153, Asp-185, and 222 to 225 (TKFE) each bind substrate.

The protein belongs to the class I-like SAM-binding methyltransferase superfamily. TrmB family.

It carries out the reaction guanosine(46) in tRNA + S-adenosyl-L-methionine = N(7)-methylguanosine(46) in tRNA + S-adenosyl-L-homocysteine. It participates in tRNA modification; N(7)-methylguanine-tRNA biosynthesis. In terms of biological role, catalyzes the formation of N(7)-methylguanine at position 46 (m7G46) in tRNA. The polypeptide is tRNA (guanine-N(7)-)-methyltransferase (Pseudomonas paraeruginosa (strain DSM 24068 / PA7) (Pseudomonas aeruginosa (strain PA7))).